Here is a 932-residue protein sequence, read N- to C-terminus: MSLQTLPSDAADSRPNRPEDVQALEADARLRDDIRLLGRILGDTVRDQEGADLFDLVERIRQTSIRFHRDEDRLARRELEQILDSMSTSETVRIVRAFSYFSHLANIAEDQNNIRQMRARTAAKIGGSGVLADTLAHAKAAGIGPDALRNFFKTALVSPVLTAHPTEVRRKSTMDREMEVASLLDRRERVALTEDEAAASDEQLRREVLTLWQTNLLRRTKLTVLDEVANGLSFYDYTFLREVPRLVNVLEDRLEEDGDQAASELASFLRMGSWIGGDRDGNPFVTADVMRGTLRLQSSRVMQFYLNELHVLGSELSIAAHLADVSEELRTLAERSPDTSPHRSGEPYRLAVSGIYARLTATAEALEVEITRRPVGKGRPYESVKELQADLDVLHRSLISNNARVIARGRLRLLRRAVDCFGFHLARLDIRQNSAVHERTIAELMDAANPGMSYLALGEDARISLLTNELRSTRALVSPFVKYSDETMGELNVFHAAAEAHAKFGSDAIPQCIISMCKGMSDMLEVAVLLKEVGLVHPSGRSAINIVPLFETIEDLQASSAIMDRMLSLHDYRRLVDSRGSVQEVMLGYSDSNKDGGFVTSGWELYKAEINLVDVFERHHVRLRLFHGRGGSVGRGGGPSYDAIIAQPGGAVNGQIRITEQGEIISSKYSNAEVGRNNLEILAAATLEASLLHPRQSAPRREYLTAMDELSSLAFRAYRGLVYETDGFVDYFWASTVINEIATLNIGSRPASRKKTRAIEDLRAIPWVFSWAQCRLMLPGWYGFGTAVEQWIAEHPDKGMPFLKELYKEWPFFRMLLSNMDMVLAKSSIAIASRYAELVPDEALREKIFGRIRREWHSCIETLLDIMGQDRLLQGNPLLERSVRHRFPYLDPLNHVQVELLREHRAQNPDEQVLRGIQLTINGISAGLRNTG.

Catalysis depends on residues histidine 164 and lysine 594.

The protein belongs to the PEPCase type 1 family. The cofactor is Mg(2+).

It catalyses the reaction oxaloacetate + phosphate = phosphoenolpyruvate + hydrogencarbonate. Functionally, forms oxaloacetate, a four-carbon dicarboxylic acid source for the tricarboxylic acid cycle. This chain is Phosphoenolpyruvate carboxylase, found in Bradyrhizobium diazoefficiens (strain JCM 10833 / BCRC 13528 / IAM 13628 / NBRC 14792 / USDA 110).